A 957-amino-acid chain; its full sequence is Histone-lysine N-methyltransferase, H3 lysine-9 specific SUVH3 (957 aa).

In terms of domain architecture, YDG spans 73–243 (GHPPGVALGD…PQVCKFLMHG (171 aa)). The tract at residues 182–209 (EAGGGEGGGGGEGGGGAKKGKGGKGGGK) is disordered. The segment covering 183–198 (AGGGEGGGGGEGGGGA) has biased composition (gly residues). One can recognise a Pre-SET domain in the interval 319–441 (DVSGGQEAVP…HECGDGCSAK (123 aa)). The SET domain occupies 455 to 920 (LPLEVFMTES…QLEELSYNYG (466 aa)). Disordered regions lie at residues 552-595 (DAAR…GGAE), 611-647 (AAGTAPGAGDNMDGVEGPAAQRSGGEEAAAGPGSSGA), and 783-805 (PPALPSTSDVGNGGTTGSGGGGG). Over residues 560–578 (QQPQQQQPQQQQQQPAAGG) the composition is skewed to low complexity. The segment covering 793–805 (GNGGTTGSGGGGG) has biased composition (gly residues). A Post-SET domain is found at 941 to 957 (FVMQCNCGAVGCIGNLM).

This sequence belongs to the class V-like SAM-binding methyltransferase superfamily. Histone-lysine methyltransferase family. Suvar3-9 subfamily.

The protein localises to the nucleus. It localises to the chromosome. The enzyme catalyses L-lysyl(9)-[histone H3] + S-adenosyl-L-methionine = N(6)-methyl-L-lysyl(9)-[histone H3] + S-adenosyl-L-homocysteine + H(+). Its function is as follows. Histone methyltransferase. Monomethylates specifically 'Lys-9' of histone H3. H3 'Lys-9Me1' (H3K9me1) functions as an epigenetic mark of repressed chromatin. The sequence is that of Histone-lysine N-methyltransferase, H3 lysine-9 specific SUVH3 (SUVH3) from Chlamydomonas reinhardtii (Chlamydomonas smithii).